The primary structure comprises 137 residues: Large ribosomal subunit protein uL16 (137 aa).

Belongs to the universal ribosomal protein uL16 family. As to quaternary structure, part of the 50S ribosomal subunit.

Binds 23S rRNA and is also seen to make contacts with the A and possibly P site tRNAs. In Rhodopseudomonas palustris (strain ATCC BAA-98 / CGA009), this protein is Large ribosomal subunit protein uL16.